The primary structure comprises 298 residues: NAD kinase (298 aa).

Asp80 (proton acceptor) is an active-site residue. Residues 80–81 (DG), 154–155 (ND), Arg182, Asp184, 195–200 (TAYALS), Ala219, and Gln253 contribute to the NAD(+) site.

This sequence belongs to the NAD kinase family. A divalent metal cation serves as cofactor.

It is found in the cytoplasm. The catalysed reaction is NAD(+) + ATP = ADP + NADP(+) + H(+). In terms of biological role, involved in the regulation of the intracellular balance of NAD and NADP, and is a key enzyme in the biosynthesis of NADP. Catalyzes specifically the phosphorylation on 2'-hydroxyl of the adenosine moiety of NAD to yield NADP. The polypeptide is NAD kinase (Paracidovorax citrulli (strain AAC00-1) (Acidovorax citrulli)).